We begin with the raw amino-acid sequence, 139 residues long: UPF0310 protein RSal33209_2865 (139 aa).

The protein belongs to the UPF0310 family.

This is UPF0310 protein RSal33209_2865 from Renibacterium salmoninarum (strain ATCC 33209 / DSM 20767 / JCM 11484 / NBRC 15589 / NCIMB 2235).